Reading from the N-terminus, the 481-residue chain is Glutamate--tRNA ligase (481 aa).

The 'HIGH' region motif lies at 9–19 (PSPTGNLHIGT). Positions 98, 100, 125, and 127 each coordinate Zn(2+). The short motif at 248–252 (KLSKR) is the 'KMSKS' region element. Lys-251 provides a ligand contact to ATP.

Belongs to the class-I aminoacyl-tRNA synthetase family. Glutamate--tRNA ligase type 1 subfamily. In terms of assembly, monomer. Requires Zn(2+) as cofactor.

It localises to the cytoplasm. It carries out the reaction tRNA(Glu) + L-glutamate + ATP = L-glutamyl-tRNA(Glu) + AMP + diphosphate. Functionally, catalyzes the attachment of glutamate to tRNA(Glu) in a two-step reaction: glutamate is first activated by ATP to form Glu-AMP and then transferred to the acceptor end of tRNA(Glu). The chain is Glutamate--tRNA ligase from Synechococcus elongatus (strain ATCC 33912 / PCC 7942 / FACHB-805) (Anacystis nidulans R2).